Here is a 272-residue protein sequence, read N- to C-terminus: Phosphatidylglycerol--prolipoprotein diacylglyceryl transferase (272 aa).

7 consecutive transmembrane segments (helical) span residues 17-37 (LAIRWYGLMYLAGFIMFLGFG), 59-79 (MLFFGVLGVILGGRLGYVLFY), 95-115 (WEGGMAFHGGFLGVVVAMWLF), 129-149 (FIAPMIPCGLAAGRIGNFING), 176-196 (SQLYQFAGEGVALFIVLWLFA), 202-222 (MGAVSGVFLIGYGAFRFAAEF), and 237-257 (LSMGQWLSLPMILAGIAMVVW). Arg-142 provides a ligand contact to a 1,2-diacyl-sn-glycero-3-phospho-(1'-sn-glycerol).

This sequence belongs to the Lgt family.

The protein resides in the cell inner membrane. The catalysed reaction is L-cysteinyl-[prolipoprotein] + a 1,2-diacyl-sn-glycero-3-phospho-(1'-sn-glycerol) = an S-1,2-diacyl-sn-glyceryl-L-cysteinyl-[prolipoprotein] + sn-glycerol 1-phosphate + H(+). Its pathway is protein modification; lipoprotein biosynthesis (diacylglyceryl transfer). In terms of biological role, catalyzes the transfer of the diacylglyceryl group from phosphatidylglycerol to the sulfhydryl group of the N-terminal cysteine of a prolipoprotein, the first step in the formation of mature lipoproteins. The protein is Phosphatidylglycerol--prolipoprotein diacylglyceryl transferase of Cupriavidus necator (strain ATCC 17699 / DSM 428 / KCTC 22496 / NCIMB 10442 / H16 / Stanier 337) (Ralstonia eutropha).